Reading from the N-terminus, the 926-residue chain is Beta-mannosidase A (926 aa).

The N-terminal stretch at 1–21 (MHVKAETVLALLTPAPPSVVG) is a signal peptide. Residues Asn40, Asn242, Asn277, Asn311, and Asn342 are each glycosylated (N-linked (GlcNAc...) asparagine). Glu474 acts as the Proton donor in catalysis. 10 N-linked (GlcNAc...) asparagine glycosylation sites follow: Asn532, Asn603, Asn626, Asn653, Asn733, Asn756, Asn785, Asn793, Asn819, and Asn905.

This sequence belongs to the glycosyl hydrolase 2 family. Beta-mannosidase A subfamily. Homodimer.

The protein localises to the secreted. It catalyses the reaction Hydrolysis of terminal, non-reducing beta-D-mannose residues in beta-D-mannosides.. It functions in the pathway glycan metabolism; N-glycan degradation. Its function is as follows. Exoglycosidase that cleaves the single beta-linked mannose residue from the non-reducing end of beta-mannosidic oligosaccharides of various complexity and length. Involved in the degradation of polymeric mannan and galactomannan. The polypeptide is Beta-mannosidase A (mndA) (Aspergillus fumigatus (strain ATCC MYA-4609 / CBS 101355 / FGSC A1100 / Af293) (Neosartorya fumigata)).